The sequence spans 219 residues: Transmembrane emp24 domain-containing protein 10 (219 aa).

An N-terminal signal peptide occupies residues 1-31 (MSGLSGPPTRRGPFPLALLLLFLLGPSLVLA). The interval 1-142 (MSGLSGPPTR…KNYEEIAKVE (142 aa)) is required for interaction with STX17. Over 32–185 (ISFHLPINSR…RDTNESTNTR (154 aa)) the chain is Lumenal. In terms of domain architecture, GOLD spans 41–193 (RKCLREEIHK…TRVLYFSIFS (153 aa)). Residues R171 and R176 each carry the dimethylated arginine modification. N179 is a glycosylation site (N-linked (GlcNAc...) asparagine). A helical membrane pass occupies residues 186-206 (VLYFSIFSMFCLIGLATWQVF). The interaction with COPG1 stretch occupies residues 204–219 (QVFYLRRFFKAKKLIE). Topologically, residues 207–219 (YLRRFFKAKKLIE) are cytoplasmic. An interaction with ARF1 and IL1B region spans residues 207-219 (YLRRFFKAKKLIE). The COPII vesicle coat-binding motif lies at 211 to 212 (FF). Positions 211–219 (FFKAKKLIE) match the COPI vesicle coat-binding motif.

This sequence belongs to the EMP24/GP25L family. As to quaternary structure, predominantly dimeric and to a lesser extent monomeric in the ER. Monomer and dimer in ERGIC and cis-Golgi network. Forms homooligomer (via GOLD domain); the assembly is promoted by direct binding with leaderless cargos and may form a protein channel that facilitates cargo entry into the ERGIC. Forms heterooligomeric complexes with other members of the p24 family such as TMED2, TMED7 and TMED9. Interacts (via GOLD domain) with TMED2 (via GOLD domain); the complex is required for export of TMED10 from the ER to the cis-Golgi network; the complex is proposed to be involved in cis-Golgi network dynamics and / or biogenesis. Associates with the COPI vesicle coat subunits (coatomer). Tetramerization of the cytoplasmic domain at the Golgi membrane in vitro; the complex is proposed to interact with COPI coatomer and induce budding of the vesicles. Interacts with COPG1; the interaction involves TMED10 homodimer. Interacts with ARF1 (GDP-bound); the interaction probably involves a TMED10 oligomer. Interacts with SEC23A, SEC24B, SEC24C and SEC24D components of the coat protein complex II/COPII, indicative of an association of TMED10 with the COPII vesicle coat. Interacts with CD59. Interacts with MPPE1/PGAP5; the complex might recruit and sort GPI-anchored proteins to the ER-exit site, or the interaction might lead to recycling of PGAP5 between the ER and the Golgi. Interacts with F2LR1/PAR2. Interacts with KDELR2/ERD2; the interaction is disrupted by KDELR2 ligand. Found in a complex composed at least of SURF4, TMED2 and TMED10. Associates with the presenilin-dependent gamma-secretase complex. Interacts with STX17; the interaction is direct. Interacts with IL-1; the interaction is direct. Interacts with RAB21 (active GTP-bound form); the interaction is indirect and regulates TMED10 abundance and localization at the Golgi.

It localises to the endoplasmic reticulum membrane. The protein resides in the endoplasmic reticulum-Golgi intermediate compartment membrane. The protein localises to the golgi apparatus membrane. Its subcellular location is the golgi apparatus. It is found in the cis-Golgi network membrane. It localises to the trans-Golgi network membrane. The protein resides in the cytoplasmic vesicle. The protein localises to the secretory vesicle membrane. Its subcellular location is the cell membrane. It is found in the melanosome. Cargo receptor involved in protein vesicular trafficking and quality control in the endoplasmic reticulum (ER) and Golgi. The p24 protein family is a group of transmembrane proteins that bind coat protein complex I/COPI and coat protein complex II/COPII involved in vesicular trafficking between the membranes. Acts at the lumenal side for incorporation of secretory cargo molecules into transport vesicles and involved in vesicle coat formation at the cytoplasmic side. Mainly functions in the early secretory pathway and cycles between the ER, ER-Golgi intermediate compartment (ERGIC) and Golgi, mediating cargo transport through COPI and COPII-coated vesicles. In COPII vesicle-mediated anterograde transport, involved in the transport of GPI-anchored proteins by acting together with TMED2 as their cargo receptor; the function specifically implies SEC24C and SEC24D of the COPII vesicle coat and lipid raft-like microdomains of the ER. Recognizes GPI anchors structural remodeled in the ER by the GPI inositol-deacylase/PGAP1 and the metallophosphoesterase MPPE1/PGAP5. In COPI vesicle-mediated retrograde transport, involved in the biogenesis of COPI vesicles and vesicle coat recruitment. Involved in trafficking of amyloid beta A4 protein and soluble APP-beta release (independent from the modulation of gamma-secretase activity). Involved in the KDELR2-mediated retrograde transport of the toxin A subunit (CTX-A-K63)together with COPI and the COOH terminus of KDELR2. On Golgi membranes, acts as a primary receptor for ARF1-GDP, a GTP-binding protein involved in COPI-vesicle formation. Increases coatomer-dependent GTPase-activating activity of ARFGAP2 which mediates the hydrolysis of ARF1-bound GTP and therefore modulates protein trafficking from the Golgi apparatus. Involved in the exocytic trafficking of G protein-coupled receptors F2LR1/PAR2 (trypsin and tryspin-like enzyme receptor), OPRM1 (opioid receptor) and P2RY4 (UTD and UDP receptor) from the Golgi to the plasma membrane, thus contributing to receptor resensitization. In addition to its cargo receptor activity, may also act as a protein channel after oligomerization, facilitating the post-translational entry of leaderless cytoplasmic cargo into the ERGIC. Involved in the translocation into ERGIC, the vesicle entry and the secretion of leaderless cargos (lacking the secretion signal sequence), including the mature form of interleukin 1/IL-1 family members, the alpha-crystallin B chain HSPB5, the carbohydrate-binding proteins galectin-1/LGALS1 and galectin-3/LGALS3, the microtubule-associated protein Tau/MAPT, and the annexin A1/ANXA1; the translocation process is dependent on cargo protein unfolding and enhanced by chaperones HSP90AB1 and HSP90B1/GRP9. Could also associates with the presenilin-dependent gamma-secretase complex in order to regulate gamma-cleavages of the amyloid beta A4 protein to yield amyloid-beta 40/Abeta40. The chain is Transmembrane emp24 domain-containing protein 10 (TMED10) from Pongo abelii (Sumatran orangutan).